Consider the following 218-residue polypeptide: Ribose-5-phosphate isomerase A (218 aa).

Residues 27-30 (TGST), 80-83 (DGAD), and 93-96 (KGGG) each bind substrate. Residue Glu-102 is the Proton acceptor of the active site. Lys-120 contacts substrate.

It belongs to the ribose 5-phosphate isomerase family. In terms of assembly, homodimer.

It carries out the reaction aldehydo-D-ribose 5-phosphate = D-ribulose 5-phosphate. Its pathway is carbohydrate degradation; pentose phosphate pathway; D-ribose 5-phosphate from D-ribulose 5-phosphate (non-oxidative stage): step 1/1. Catalyzes the reversible conversion of ribose-5-phosphate to ribulose 5-phosphate. This Picrophilus torridus (strain ATCC 700027 / DSM 9790 / JCM 10055 / NBRC 100828 / KAW 2/3) protein is Ribose-5-phosphate isomerase A.